The chain runs to 338 residues: H(2)-forming methylenetetrahydromethanopterin dehydrogenase-related protein MJ0715 (338 aa).

This sequence belongs to the HMD family.

The chain is H(2)-forming methylenetetrahydromethanopterin dehydrogenase-related protein MJ0715 from Methanocaldococcus jannaschii (strain ATCC 43067 / DSM 2661 / JAL-1 / JCM 10045 / NBRC 100440) (Methanococcus jannaschii).